Consider the following 293-residue polypeptide: 33 kDa chaperonin (293 aa).

2 disulfide bridges follow: Cys-238–Cys-240 and Cys-271–Cys-274.

It belongs to the HSP33 family. In terms of processing, under oxidizing conditions two disulfide bonds are formed involving the reactive cysteines. Under reducing conditions zinc is bound to the reactive cysteines and the protein is inactive.

Its subcellular location is the cytoplasm. Its function is as follows. Redox regulated molecular chaperone. Protects both thermally unfolding and oxidatively damaged proteins from irreversible aggregation. Plays an important role in the bacterial defense system toward oxidative stress. This chain is 33 kDa chaperonin, found in Staphylococcus aureus (strain USA300).